A 245-amino-acid chain; its full sequence is 1-(5-phosphoribosyl)-5-[(5-phosphoribosylamino)methylideneamino] imidazole-4-carboxamide isomerase (245 aa).

Asp7 functions as the Proton acceptor in the catalytic mechanism. Asp129 serves as the catalytic Proton donor.

It belongs to the HisA/HisF family.

It localises to the cytoplasm. It carries out the reaction 1-(5-phospho-beta-D-ribosyl)-5-[(5-phospho-beta-D-ribosylamino)methylideneamino]imidazole-4-carboxamide = 5-[(5-phospho-1-deoxy-D-ribulos-1-ylimino)methylamino]-1-(5-phospho-beta-D-ribosyl)imidazole-4-carboxamide. It functions in the pathway amino-acid biosynthesis; L-histidine biosynthesis; L-histidine from 5-phospho-alpha-D-ribose 1-diphosphate: step 4/9. The chain is 1-(5-phosphoribosyl)-5-[(5-phosphoribosylamino)methylideneamino] imidazole-4-carboxamide isomerase from Escherichia coli O9:H4 (strain HS).